Reading from the N-terminus, the 326-residue chain is Probable pectate lyase B (326 aa).

The signal sequence occupies residues 1–15 (MRVTAILTLATIAIA). Residues D133, D162, and D166 each coordinate Ca(2+). Residue R219 is part of the active site.

It belongs to the polysaccharide lyase 1 family. Ca(2+) is required as a cofactor.

It is found in the secreted. It catalyses the reaction Eliminative cleavage of (1-&gt;4)-alpha-D-galacturonan to give oligosaccharides with 4-deoxy-alpha-D-galact-4-enuronosyl groups at their non-reducing ends.. Functionally, pectinolytic enzyme consist of four classes of enzymes: pectin lyase, polygalacturonase, pectin methylesterase and rhamnogalacturonase. Among pectinolytic enzymes, pectin lyase is the most important in depolymerization of pectin, since it cleaves internal glycosidic bonds of highly methylated pectins. Favors pectate, the anion, over pectin, the methyl ester. The polypeptide is Probable pectate lyase B (plyB) (Aspergillus flavus (strain ATCC 200026 / FGSC A1120 / IAM 13836 / NRRL 3357 / JCM 12722 / SRRC 167)).